Reading from the N-terminus, the 415-residue chain is Putative ankyrin repeat protein FPV034 (415 aa).

ANK repeat units lie at residues 12–41 (ICIKLLEQAIELKDYIVVRMILNQQENINT), 43–72 (KHFNMLRKAVLNHDHNLVNIFIDKNFNINI), 76–105 (VGYTLLRYAVEVDDVNIAKILLDAGSIINK), 107–135 (DYRLLHSAITHENKKMIELLCLHGININV), 139–168 (KGYTALYYTICNNNYDMVCFLLEKNADISI), 170–200 (NKYSMLHFLSTSNKYHNVMAVLLDKGIDVNI), 203–232 (HVKAPIHVAVERNNIYGTMLLINRNADVNI), 237–266 (GGRTSLHLAIKERNYEAAFVLINNGANVDS), 270–299 (VGNTPIFIAASLQDVRFMKLLLDNGADINV), and 303–332 (FGETPVNMVITGGSKEVTQYTVSYLISLKV).

The sequence is that of Putative ankyrin repeat protein FPV034 (ANK2) from Fowlpox virus (strain NVSL) (FPV).